The sequence spans 301 residues: Heat shock factor protein HSF24 (301 aa).

The DNA-binding element occupies 7-101 (PAPFLLKTYQ…LLTAIRRRKT (95 aa)). Disordered stretches follow at residues 103 to 160 (TSTP…DENE) and 221 to 244 (GVKD…DEKG). Low complexity predominate over residues 107–142 (AGGKSVAAGASASPDNSGDDIGSSSTSSPDSKNPGS). A compositionally biased stretch (acidic residues) spans 233-243 (DNDDKEDDDEK).

This sequence belongs to the HSF family. As to quaternary structure, homotrimer. Post-translationally, exhibits temperature-dependent phosphorylation.

The protein resides in the nucleus. Its function is as follows. DNA-binding protein that specifically binds heat shock promoter elements (HSE) and activates transcription. This is Heat shock factor protein HSF24 (HSF24) from Solanum peruvianum (Peruvian tomato).